The following is an 831-amino-acid chain: MutS protein homolog 5 (831 aa).

A disordered region spans residues 1–43; that stretch reads MAFRATPGRTPPGPGPGVPSASFSSPQPAMAAPGGIEEEDEEE. 589–596 serves as a coordination point for ATP; it reads GPNSSGKS.

This sequence belongs to the DNA mismatch repair MutS family. Heterooligomer of MSH4 and MSH5. Interacts with HJURP. Interacts with C7h12orf40/REDIC1.

In terms of biological role, involved in DNA mismatch repair and meiotic recombination processes. Facilitates crossovers between homologs during meiosis. This is MutS protein homolog 5 (Msh5) from Rattus norvegicus (Rat).